Here is a 763-residue protein sequence, read N- to C-terminus: C6 finger domain transcription factor hasF (763 aa).

Over residues 1–20 the composition is skewed to low complexity; that stretch reads MDSTTSSSRFSVSSPQSGPS. Residues 1 to 25 are disordered; sequence MDSTTSSSRFSVSSPQSGPSAGIQK. A DNA-binding region (zn(2)-C6 fungal-type) is located at residues 34 to 61; it reads CLTCRRRKVKCDHAQPVCTPCQRGGRVC. Disordered stretches follow at residues 68–91, 112–145, and 189–219; these read PVSQ…RSGQ, GGNM…PKCE, and DQSS…ESLT. Over residues 80–89 the composition is skewed to polar residues; sequence SRVSRTNLRS. Pro residues predominate over residues 197–209; the sequence is DSPPSDQPTPPFP.

The protein resides in the nucleus. Transcription factor; part of the gene cluster that mediates the biosynthesis of hexadehydro-astechrome (HAS), a tryptophan-derived iron(III)-complex that acts as a virulence factor in infected mice. Does not regulate the expression of the HAS biosynthetic genes (at least under the growth conditions tested). This chain is C6 finger domain transcription factor hasF, found in Aspergillus fumigatus (strain CBS 144.89 / FGSC A1163 / CEA10) (Neosartorya fumigata).